Here is a 263-residue protein sequence, read N- to C-terminus: uncharacterized protein (263 aa).

31–38 is a binding site for ATP; sequence GPTGSGKT.

Belongs to the CbbQ/NirQ/NorQ/GpvN family.

This is an uncharacterized protein from Staphylococcus epidermidis (strain ATCC 35984 / DSM 28319 / BCRC 17069 / CCUG 31568 / BM 3577 / RP62A).